Consider the following 197-residue polypeptide: Ribonuclease HII (197 aa).

The 188-residue stretch at 10-197 folds into the RNase H type-2 domain; it reads ELIAGVDEVG…APVRKLLNTL (188 aa). A divalent metal cation is bound by residues Asp16, Glu17, and Asp108.

Belongs to the RNase HII family. Requires Mn(2+) as cofactor. Mg(2+) is required as a cofactor.

Its subcellular location is the cytoplasm. The enzyme catalyses Endonucleolytic cleavage to 5'-phosphomonoester.. Functionally, endonuclease that specifically degrades the RNA of RNA-DNA hybrids. The protein is Ribonuclease HII (rnhB) of Pasteurella multocida (strain Pm70).